We begin with the raw amino-acid sequence, 240 residues long: Peptidyl-tRNA hydrolase (240 aa).

Y14 is a binding site for tRNA. Residue H19 is the Proton acceptor of the active site. 3 residues coordinate tRNA: F64, N66, and N112. Residues 196 to 227 are disordered; sequence EKPAQKQQPKQQSHIRQARSQQAPAKLPETGP. Residues 209–218 show a composition bias toward polar residues; sequence HIRQARSQQA.

Belongs to the PTH family. As to quaternary structure, monomer.

It localises to the cytoplasm. It catalyses the reaction an N-acyl-L-alpha-aminoacyl-tRNA + H2O = an N-acyl-L-amino acid + a tRNA + H(+). Hydrolyzes ribosome-free peptidyl-tRNAs (with 1 or more amino acids incorporated), which drop off the ribosome during protein synthesis, or as a result of ribosome stalling. Functionally, catalyzes the release of premature peptidyl moieties from peptidyl-tRNA molecules trapped in stalled 50S ribosomal subunits, and thus maintains levels of free tRNAs and 50S ribosomes. In Mesorhizobium japonicum (strain LMG 29417 / CECT 9101 / MAFF 303099) (Mesorhizobium loti (strain MAFF 303099)), this protein is Peptidyl-tRNA hydrolase.